We begin with the raw amino-acid sequence, 147 residues long: HTH-type transcriptional regulator HmrR (147 aa).

Positions 1–69 (MNIGEASKVS…VEQIKELLAL (69 aa)) constitute an HTH merR-type domain. The H-T-H motif DNA-binding region spans 4 to 23 (GEASKVSGVSSKMIRYYEQI).

In terms of assembly, homodimer.

It localises to the cytoplasm. Regulates the transcription of actP. It detects cytoplasmic copper stress and activates transcription in response to increasing copper concentrations. In the absence of copper, it negatively regulates the transcription of actP. The chain is HTH-type transcriptional regulator HmrR (hmrR) from Sinorhizobium medicae (strain WSM419) (Ensifer medicae).